Here is a 230-residue protein sequence, read N- to C-terminus: Fibrillarin-like rRNA/tRNA 2'-O-methyltransferase (230 aa).

S-adenosyl-L-methionine-binding positions include 87 to 88 (TT), 105 to 106 (EF), 130 to 131 (DA), and 150 to 153 (DVAQ).

It belongs to the methyltransferase superfamily. Fibrillarin family. As to quaternary structure, interacts with nop5. Component of box C/D small ribonucleoprotein (sRNP) particles that contain rpl7ae, FlpA and nop5, plus a guide RNA.

Involved in pre-rRNA and tRNA processing. Utilizes the methyl donor S-adenosyl-L-methionine to catalyze the site-specific 2'-hydroxyl methylation of ribose moieties in rRNA and tRNA. Site specificity is provided by a guide RNA that base pairs with the substrate. Methylation occurs at a characteristic distance from the sequence involved in base pairing with the guide RNA. This Methanococcus maripaludis (strain C6 / ATCC BAA-1332) protein is Fibrillarin-like rRNA/tRNA 2'-O-methyltransferase.